We begin with the raw amino-acid sequence, 161 residues long: Ribonuclease P protein component (161 aa).

The protein belongs to the RnpA family. Consists of a catalytic RNA component (M1 or rnpB) and a protein subunit.

It catalyses the reaction Endonucleolytic cleavage of RNA, removing 5'-extranucleotides from tRNA precursor.. Its function is as follows. RNaseP catalyzes the removal of the 5'-leader sequence from pre-tRNA to produce the mature 5'-terminus. It can also cleave other RNA substrates such as 4.5S RNA. The protein component plays an auxiliary but essential role in vivo by binding to the 5'-leader sequence and broadening the substrate specificity of the ribozyme. The chain is Ribonuclease P protein component from Helicobacter pylori (strain Shi470).